The following is a 249-amino-acid chain: Probable transcriptional regulator ycf27 (249 aa).

One can recognise a Response regulatory domain in the interval 13-126 (HLLIVDDENN…ELEARIQSIL (114 aa)). Residue Asp62 is modified to 4-aspartylphosphate. Residues 82 to 100 (DIPIIMLTALEDVLDKVTG) constitute a DNA-binding region (H-T-H motif). The ompR/PhoB-type DNA-binding region spans 142–246 (INLFKTGSLN…ARGTGYLCRK (105 aa)).

It localises to the plastid. It is found in the chloroplast. Its function is as follows. Probable promoter-specific protein mediating the interaction between DNA and RNA polymerase. The polypeptide is Probable transcriptional regulator ycf27 (ycf27) (Cyanidium caldarium (Red alga)).